Reading from the N-terminus, the 23-residue chain is Alyteserin-1a (23 aa).

An Asparagine amide modification is found at Asn-23.

Expressed by the skin glands.

It localises to the secreted. The protein localises to the target cell membrane. Functionally, antibacterial peptide with amphipathic alpha-helical structure. Shows selective growth inhibitory activity against the Gram-negative bacteria E.coli (MIC=25 uM) Has a weak hemolytic activity against human erythrocytes (LC(50)&gt;100 uM). Is very weakly active against S.aureus (MIC=200 uM). The sequence is that of Alyteserin-1a from Alytes obstetricans (Common midwife toad).